We begin with the raw amino-acid sequence, 201 residues long: 3-isopropylmalate dehydratase small subunit (201 aa).

The protein belongs to the LeuD family. LeuD type 1 subfamily. As to quaternary structure, heterodimer of LeuC and LeuD.

It carries out the reaction (2R,3S)-3-isopropylmalate = (2S)-2-isopropylmalate. It functions in the pathway amino-acid biosynthesis; L-leucine biosynthesis; L-leucine from 3-methyl-2-oxobutanoate: step 2/4. In terms of biological role, catalyzes the isomerization between 2-isopropylmalate and 3-isopropylmalate, via the formation of 2-isopropylmaleate. The polypeptide is 3-isopropylmalate dehydratase small subunit (Rhodopseudomonas palustris (strain BisA53)).